We begin with the raw amino-acid sequence, 507 residues long: MTTIKADEISNIIRERIEQYNREVKIVNIGTVLQVGDGIARIYGLDEVMAGELVEFEEGTIGIALNLESTNVGVVLMGDGLMIQEGSSVKATGKIAQIPVSEAYLGRVINALAKPIDGRGEISASESRLIESPAPGIISRRSVYEPLQTGLIAIDSMIPIGRGQRELIIGDRQTGKTAVATDTILNQQGQNVICVYVAIGQKASSVAQVVNTFQERGAMDYTIVVAETADSPATLQYLAPYTGAALAEYFMYRERHTLIIYDDPSKQAQAYRQMSLLLRRPPGREAYPGDVFYLHSRLLERAAKLGSQLGEGSMTALPIVETQSGDVSAYIPTNVISITDGQIFLSADLFNAGIRPAINVGISVSRVGSAAQIKAMKQVAGKLKLELAQFAELEAFAQFASDLDKATQNQLARGQRLRELLKQAQAAPLTVEEQIMTIYTGTNGYLDSLEIGQVRKFLVELRTYLKTNKPQFQEIISSTKIFTEEAEALLQEAIQEQKERFLLQEQF.

170–177 (GDRQTGKT) contacts ATP.

Belongs to the ATPase alpha/beta chains family. F-type ATPases have 2 components, CF(1) - the catalytic core - and CF(0) - the membrane proton channel. CF(1) has five subunits: alpha(3), beta(3), gamma(1), delta(1), epsilon(1). CF(0) has four main subunits: a, b, b' and c.

The protein resides in the plastid. Its subcellular location is the chloroplast thylakoid membrane. It catalyses the reaction ATP + H2O + 4 H(+)(in) = ADP + phosphate + 5 H(+)(out). Functionally, produces ATP from ADP in the presence of a proton gradient across the membrane. The alpha chain is a regulatory subunit. This is ATP synthase subunit alpha, chloroplastic from Citrus sinensis (Sweet orange).